A 276-amino-acid polypeptide reads, in one-letter code: Radial spoke head protein 9 homolog (276 aa).

The protein belongs to the flagellar radial spoke RSP9 family. As to quaternary structure, component of the axonemal radial spoke 1 (RS1) and 2 (RS2) complexes, at least composed of spoke head proteins RSPH1, RSPH3, RSPH9 and the cilia-specific component RSPH4A or sperm-specific component RSPH6A, spoke stalk proteins RSPH14, DNAJB13, DYDC1, ROPN1L and NME5, and the RS1 complex-specific anchor protein IQUB. Interacts with IQUB. Interacts with RSPH3B. Interacts with RSPH4A. Interacts with RSPH6A. Interacts with CFAP61. Interacts with LRRC23.

It is found in the cytoplasm. Its subcellular location is the cytoskeleton. The protein localises to the cilium axoneme. The protein resides in the flagellum axoneme. It localises to the cell projection. It is found in the kinocilium. In terms of biological role, functions as part of axonemal radial spoke complexes that play an important part in the motility of sperm and cilia. Essential for both the radial spoke head assembly and the central pair microtubule stability in ependymal motile cilia. Required for motility of olfactory and neural cilia and for the structural integrity of ciliary axonemes in both 9+0 and 9+2 motile cilia. The protein is Radial spoke head protein 9 homolog (RSPH9) of Bos taurus (Bovine).